A 137-amino-acid polypeptide reads, in one-letter code: Fluoride-specific ion channel FluC 1 (137 aa).

4 consecutive transmembrane segments (helical) span residues 4–24, 37–57, 67–87, and 98–118; these read LIYI…YYLG, LATL…TTYI, VITG…TLSV, and WGIA…MSGL. 2 residues coordinate Na(+): Gly77 and Thr80.

This sequence belongs to the fluoride channel Fluc/FEX (TC 1.A.43) family.

It is found in the cell membrane. The enzyme catalyses fluoride(in) = fluoride(out). With respect to regulation, na(+) is not transported, but it plays an essential structural role and its presence is essential for fluoride channel function. Functionally, fluoride-specific ion channel. Important for reducing fluoride concentration in the cell, thus reducing its toxicity. The sequence is that of Fluoride-specific ion channel FluC 1 from Bacillus anthracis.